Reading from the N-terminus, the 361-residue chain is P2Y purinoceptor 4 (361 aa).

Residues 1 to 30 (MTSADSLLFTSLGPSPSSGDGDCKFNEEFK) are Extracellular-facing. The chain crosses the membrane as a helical span at residues 31 to 58 (FILLPLSYAVVFVLGLALNAPTLWLFLF). The Cytoplasmic portion of the chain corresponds to 59–68 (RLRPWDATAT). Residues 69–91 (YMFHLALSDTLYVLSLPTLVYYY) traverse the membrane as a helical segment. Residues 92–108 (AARNHWPFGTGFCKFVR) lie on the Extracellular side of the membrane. Cysteines 104 and 181 form a disulfide. A helical transmembrane segment spans residues 109–127 (FLFYWNLYCSVLFLTCISV). The Cytoplasmic portion of the chain corresponds to 128-149 (HRYMGICHPLRAIRWGRPRFAG). The helical transmembrane segment at 150 to 170 (LLCLGVWLVVAGCLVPNLFFV) threads the bilayer. At 171 to 192 (TTNANGTTILCHDTTLPEEFDH) the chain is on the extracellular side. Asn-175 is a glycosylation site (N-linked (GlcNAc...) asparagine). The helical transmembrane segment at 193-218 (YVYFSSTIMVLLFGFPFLITLVCYGL) threads the bilayer. At 219 to 242 (MARRLYRPLPGAGQSSSRLRSLRT) the chain is on the cytoplasmic side. Residues 243-265 (IAVVLTVFAVCFVPFHITRTIYY) form a helical membrane-spanning segment. Residues 266–283 (LARLLNAECRVLNIVNVV) are Extracellular-facing. Residues 284–305 (YKVTRPLASANSCLDPVLYLFT) form a helical membrane-spanning segment. Topologically, residues 306 to 361 (GDKYRNQLQQLCRGSTPKRRTTASSLALVTLHEESISRWADIHQDSIFPAYEGDRL) are cytoplasmic.

Belongs to the G-protein coupled receptor 1 family. In terms of processing, phosphorylation of Ser-329 and Ser-330 is a key step in agonist-dependent desensitization and loss of surface P2RY4. This phosphorylation does not involve PKC, nor other calcium-activated kinases. Expressed in the liver, intestine, stomach, bladder and lung.

The protein resides in the cell membrane. In terms of biological role, receptor for ATP and UTP coupled to G-proteins that activate a phosphatidylinositol-calcium second messenger system. This is P2Y purinoceptor 4 (P2ry4) from Mus musculus (Mouse).